Reading from the N-terminus, the 176-residue chain is 3-hydroxydecanoyl-[acyl-carrier-protein] dehydratase (176 aa).

Histidine 71 is an active-site residue.

This sequence belongs to the thioester dehydratase family. FabA subfamily. In terms of assembly, homodimer.

The protein localises to the cytoplasm. The catalysed reaction is a (3R)-hydroxyacyl-[ACP] = a (2E)-enoyl-[ACP] + H2O. The enzyme catalyses (3R)-hydroxydecanoyl-[ACP] = (2E)-decenoyl-[ACP] + H2O. It catalyses the reaction (2E)-decenoyl-[ACP] = (3Z)-decenoyl-[ACP]. The protein operates within lipid metabolism; fatty acid biosynthesis. Functionally, necessary for the introduction of cis unsaturation into fatty acids. Catalyzes the dehydration of (3R)-3-hydroxydecanoyl-ACP to E-(2)-decenoyl-ACP and then its isomerization to Z-(3)-decenoyl-ACP. Can catalyze the dehydratase reaction for beta-hydroxyacyl-ACPs with saturated chain lengths up to 16:0, being most active on intermediate chain length. The chain is 3-hydroxydecanoyl-[acyl-carrier-protein] dehydratase from Afipia carboxidovorans (strain ATCC 49405 / DSM 1227 / KCTC 32145 / OM5) (Oligotropha carboxidovorans).